A 253-amino-acid chain; its full sequence is Probable transcriptional regulatory protein Krad_3057 (253 aa).

Belongs to the TACO1 family.

The protein localises to the cytoplasm. The sequence is that of Probable transcriptional regulatory protein Krad_3057 from Kineococcus radiotolerans (strain ATCC BAA-149 / DSM 14245 / SRS30216).